A 118-amino-acid chain; its full sequence is uncharacterized protein (118 aa).

The protein belongs to the transposase IS3/IS150/IS904 family.

This is an uncharacterized protein from Haemophilus influenzae (strain ATCC 51907 / DSM 11121 / KW20 / Rd).